A 368-amino-acid polypeptide reads, in one-letter code: Cytochrome P450 119 (368 aa).

Heme contacts are provided by His76, Arg80, Thr257, Arg259, His315, and Cys317.

The protein belongs to the cytochrome P450 family. The cofactor is heme.

The protein resides in the cytoplasm. The enzyme catalyses 2 a phenolic donor + H2O2 = 2 a phenolic radical donor + 2 H2O. The endogenous substrate is not known. In vitro, catalyzes the H(2)O(2)-dependent epoxidation of styrene, cis-beta-methylstyrene, and cis-stilbene with retention of stereochemistry. Is able to use cumene hydroperoxide (CHP) or tert-butyl hydroperoxide (TBHP) instead of H(2)O(2) as the electron acceptor. Can also hydroxylate fatty acids such as lauric acid. The sequence is that of Cytochrome P450 119 (cyp119) from Sulfolobus acidocaldarius (strain ATCC 33909 / DSM 639 / JCM 8929 / NBRC 15157 / NCIMB 11770).